Consider the following 717-residue polypeptide: Ribosomal RNA large subunit methyltransferase K/L (717 aa).

A THUMP domain is found at D44 to L155.

This sequence belongs to the methyltransferase superfamily. RlmKL family.

It localises to the cytoplasm. The enzyme catalyses guanosine(2445) in 23S rRNA + S-adenosyl-L-methionine = N(2)-methylguanosine(2445) in 23S rRNA + S-adenosyl-L-homocysteine + H(+). The catalysed reaction is guanosine(2069) in 23S rRNA + S-adenosyl-L-methionine = N(2)-methylguanosine(2069) in 23S rRNA + S-adenosyl-L-homocysteine + H(+). Specifically methylates the guanine in position 2445 (m2G2445) and the guanine in position 2069 (m7G2069) of 23S rRNA. The polypeptide is Ribosomal RNA large subunit methyltransferase K/L (Francisella tularensis subsp. tularensis (strain SCHU S4 / Schu 4)).